A 972-amino-acid chain; its full sequence is Aminopeptidase N (972 aa).

The Cytoplasmic segment spans residues 2–17 (TSQGRTRTLLNLTPIR). The helical; Signal-anchor for type II membrane protein transmembrane segment at 18-39 (LIVALFLVAAAVGLSIGLTYYF) threads the bilayer. The Extracellular portion of the chain corresponds to 40–972 (TRKAFDTSEK…LAAFFKKATL (933 aa)). The segment covering 47-62 (SEKPGKDDTGGKDKDN) has biased composition (basic and acidic residues). The tract at residues 47–66 (SEKPGKDDTGGKDKDNSPSA) is disordered. Residue asparagine 99 is glycosylated (N-linked (GlcNAc...) asparagine). Glutamate 208 lines the substrate pocket. Asparagine 227 carries an N-linked (GlcNAc...) asparagine glycan. 343 to 347 (GAMEN) contributes to the substrate binding site. Histidine 379 provides a ligand contact to Zn(2+). Residue glutamate 380 is the Proton acceptor of the active site. Positions 383 and 402 each coordinate Zn(2+). Asparagine 549 carries N-linked (GlcNAc...) asparagine glycosylation. Intrachain disulfides connect cysteine 759-cysteine 766 and cysteine 804-cysteine 840. N-linked (GlcNAc...) asparagine glycosylation occurs at asparagine 858.

Belongs to the peptidase M1 family. Zn(2+) is required as a cofactor.

The protein localises to the membrane. The catalysed reaction is Release of an N-terminal amino acid, Xaa-|-Yaa- from a peptide, amide or arylamide. Xaa is preferably Ala, but may be most amino acids including Pro (slow action). When a terminal hydrophobic residue is followed by a prolyl residue, the two may be released as an intact Xaa-Pro dipeptide.. This chain is Aminopeptidase N, found in Haemonchus contortus (Barber pole worm).